A 2474-amino-acid chain; its full sequence is Highly reducing polyketide synthase 40 (2474 aa).

The 294-residue stretch at 1–294 folds into the Ketosynthase family 3 (KS3) domain; the sequence is MFKETEIQQR…GSNAHIIIDD (294 aa). Active-site for beta-ketoacyl synthase activity residues include cysteine 42, histidine 177, and histidine 217. In terms of domain architecture, Malonyl-CoA:ACP transacylase (MAT) spans 459-798; it reads FVFTGQGAQW…GYESVLRRGT (340 aa). The segment at 864-998 is N-terminal hotdog fold; the sequence is HELLGAPVPD…GLVVTEYEQP (135 aa). A PKS/mFAS DH domain is found at 864-1182; sequence HELLGAPVPD…ITTVARSEGA (319 aa). The active-site Proton acceptor; for dehydratase activity is the histidine 896. The C-terminal hotdog fold stretch occupies residues 1027-1182; it reads KVETSFRQLY…ITTVARSEGA (156 aa). Aspartate 1093 acts as the Proton donor; for dehydratase activity in catalysis. The tract at residues 1232–1535 is methyltransferase (CMet) domain; it reads VEMMCFLYIK…DLHIYDFPDH (304 aa). The Enoyl reductase (ER) domain occupies 1770-2063; it reads GLLDSLQFQD…SGSHMGKLVL (294 aa). One can recognise a Ketoreductase (KR) domain in the interval 2087–2263; that stretch reads ASYLLSGGLG…PGVAVDLGMI (177 aa). Residues 2385 to 2462 form the Carrier domain; that stretch reads DAAKIVSAAI…ELAELAAKRS (78 aa). Serine 2422 carries the post-translational modification O-(pantetheine 4'-phosphoryl)serine.

Requires pantetheine 4'-phosphate as cofactor.

It participates in secondary metabolite biosynthesis. In terms of biological role, highly reducing polyketide synthase; part of the gene cluster that mediates the biosynthesis of the gamma-pyrones fusapyrone (FPY) and deoxyfusapyrone (dFPY). FPY is an undecaketide and thus likely synthesized by the polyketide synthase FPY1 from acetyl-CoA functioning as starter unit and the addition of 10 malonyl-CoA extender units by successive Claisen-condensations. Next to this, FPY shares some rare features: C-glycosylated 4-deoxyglucose at C-3, a gem-dimethyl group at C-13, and an alpha-beta to beta-gamma double bond shift at C-20. During FPY biosynthesis mono-C-methyl groups are transferred to the tetra-, penta-, hexa- and heptaketide, while two C-methyl groups are transferred to the nonaketide, suggesting that the CMet domain is programmed to selectively catalyze two successive C-alpha-methylation reactions of the nonaketide, while other alpha-carbons are non- or mono-methylated only. While the origin of the 4'-deoxyglucose moiety remains opaque, its transfer to C-3 is most likely mediated by the C-glycosyltransferase FPY2. Next to this, the hydroxyl group present at C-33 and discriminating between FPY and dFPY, is likely to be installed by the cytochrome P450 monooxygenase FPY7. No putative function can be predicted for the remaining genes FPY3-FPY6. The polypeptide is Highly reducing polyketide synthase 40 (Fusarium mangiferae (Mango malformation disease fungus)).